A 187-amino-acid chain; its full sequence is Interferon beta (187 aa).

The signal sequence occupies residues 1-21 (MTNKCLLQIALLLCFSTTALS). Tyr24 is modified (phosphotyrosine). An intrachain disulfide couples Cys52 to Cys162. Asn101 carries an N-linked (GlcNAc...) asparagine glycan.

The protein belongs to the alpha/beta interferon family. In terms of assembly, monomer.

The protein resides in the secreted. Type I interferon cytokine that plays a key role in the innate immune response to infection, developing tumors and other inflammatory stimuli. Signals via binding to high-affinity (IFNAR2) and low-affinity (IFNAR1) heterodimeric receptor, activating the canonical Jak-STAT signaling pathway resulting in transcriptional activation or repression of interferon-regulated genes that encode the effectors of the interferon response, such as antiviral proteins, regulators of cell proliferation and differentiation, and immunoregulatory proteins. Signals mostly via binding to a IFNAR1-IFNAR2 heterodimeric receptor, but can also function with IFNAR1 alone and independently of Jak-STAT pathways. Elicits a wide variety of responses, including antiviral and antibacterial activities, and can regulate the development of B-cells, myelopoiesis and lipopolysaccharide (LPS)-inducible production of tumor necrosis factor. Plays a role in neuronal homeostasis by regulating dopamine turnover and protecting dopaminergic neurons: acts by promoting neuronal autophagy and alpha-synuclein clearance, thereby preventing dopaminergic neuron loss. IFNB1 is more potent than interferon-alpha (IFN-alpha) in inducing the apoptotic and antiproliferative pathways required for control of tumor cell growth. In Macaca fascicularis (Crab-eating macaque), this protein is Interferon beta (IFNB1).